Reading from the N-terminus, the 475-residue chain is Ribulose bisphosphate carboxylase large chain (475 aa).

A propeptide spanning residues methionine 1 to serine 2 is cleaved from the precursor. At proline 3 the chain carries N-acetylproline. Lysine 14 is modified (N6,N6,N6-trimethyllysine). The substrate site is built by asparagine 123 and threonine 173. Residue lysine 175 is the Proton acceptor of the active site. Lysine 177 provides a ligand contact to substrate. Mg(2+) contacts are provided by lysine 201, aspartate 203, and glutamate 204. An N6-carboxylysine modification is found at lysine 201. Histidine 294 (proton acceptor) is an active-site residue. Residues arginine 295, histidine 327, and serine 379 each contribute to the substrate site.

The protein belongs to the RuBisCO large chain family. Type I subfamily. Heterohexadecamer of 8 large chains and 8 small chains; disulfide-linked. The disulfide link is formed within the large subunit homodimers. Mg(2+) is required as a cofactor. The disulfide bond which can form in the large chain dimeric partners within the hexadecamer appears to be associated with oxidative stress and protein turnover.

It localises to the plastid. The protein localises to the chloroplast. It catalyses the reaction 2 (2R)-3-phosphoglycerate + 2 H(+) = D-ribulose 1,5-bisphosphate + CO2 + H2O. The enzyme catalyses D-ribulose 1,5-bisphosphate + O2 = 2-phosphoglycolate + (2R)-3-phosphoglycerate + 2 H(+). In terms of biological role, ruBisCO catalyzes two reactions: the carboxylation of D-ribulose 1,5-bisphosphate, the primary event in carbon dioxide fixation, as well as the oxidative fragmentation of the pentose substrate in the photorespiration process. Both reactions occur simultaneously and in competition at the same active site. The protein is Ribulose bisphosphate carboxylase large chain of Buxus microphylla (Littleleaf boxwood).